The sequence spans 475 residues: Ribulose bisphosphate carboxylase large chain (475 aa).

A propeptide spanning residues 1–2 (MS) is cleaved from the precursor. P3 is subject to N-acetylproline. K14 bears the N6,N6,N6-trimethyllysine mark. Substrate contacts are provided by N123 and T173. K175 (proton acceptor) is an active-site residue. K177 is a binding site for substrate. Residues K201, D203, and E204 each contribute to the Mg(2+) site. K201 carries the N6-carboxylysine modification. H294 (proton acceptor) is an active-site residue. Positions 295, 327, and 379 each coordinate substrate.

It belongs to the RuBisCO large chain family. Type I subfamily. As to quaternary structure, heterohexadecamer of 8 large chains and 8 small chains; disulfide-linked. The disulfide link is formed within the large subunit homodimers. Mg(2+) serves as cofactor. Post-translationally, the disulfide bond which can form in the large chain dimeric partners within the hexadecamer appears to be associated with oxidative stress and protein turnover.

It is found in the plastid. The protein resides in the chloroplast. The catalysed reaction is 2 (2R)-3-phosphoglycerate + 2 H(+) = D-ribulose 1,5-bisphosphate + CO2 + H2O. It carries out the reaction D-ribulose 1,5-bisphosphate + O2 = 2-phosphoglycolate + (2R)-3-phosphoglycerate + 2 H(+). RuBisCO catalyzes two reactions: the carboxylation of D-ribulose 1,5-bisphosphate, the primary event in carbon dioxide fixation, as well as the oxidative fragmentation of the pentose substrate in the photorespiration process. Both reactions occur simultaneously and in competition at the same active site. This Stellaria media (Common chickweed) protein is Ribulose bisphosphate carboxylase large chain.